A 159-amino-acid polypeptide reads, in one-letter code: Carbohydrate sulfotransferase 15 (159 aa).

The Lumenal segment spans residues 1–159 (SGTTDFYRRI…YQPHNERLVK (159 aa)). N-linked (GlcNAc...) asparagine glycans are attached at residues asparagine 42 and asparagine 112.

The protein belongs to the sulfotransferase 1 family. A divalent metal cation serves as cofactor. Requires glutathione as cofactor.

The protein localises to the golgi apparatus membrane. It carries out the reaction dermatan 4'-sulfate + n 3'-phosphoadenylyl sulfate = dermatan 4',6'-bissulfate + n adenosine 3',5'-bisphosphate + n H(+). The enzyme catalyses chondroitin 4'-sulfate + n 3'-phosphoadenylyl sulfate = chondroitin 4',6'-bissulfate + n adenosine 3',5'-bisphosphate + n H(+). In terms of biological role, sulfotransferase that transfers sulfate from 3'-phosphoadenosine 5'-phosphosulfate (PAPS) to the C-6 hydroxyl group of the GalNAc 4-sulfate residue of chondroitin sulfate A and forms chondroitin sulfate E containing GlcA-GalNAc(4,6-SO(4)) repeating units. In Nototodarus sloanii (Wellington flying squid), this protein is Carbohydrate sulfotransferase 15 (GALNAC4S6ST).